The chain runs to 582 residues: Membrane protein insertase YidC (582 aa).

Residues 3–23 (IQRALVITGIAVVSYLMIQAW) traverse the membrane as a helical segment. The segment at 38–92 (QVAEQGNSSSSDSADLPSVQSQTDNSIPSAQSDNDLPSVSPADIAQPTPSSQRIE) is disordered. Over residues 45–58 (SSSSDSADLPSVQS) the composition is skewed to low complexity. Residues 59–74 (QTDNSIPSAQSDNDLP) show a composition bias toward polar residues. 5 helical membrane passes run 357-377 (TVDY…LVFL), 394-414 (GVGN…AIFF), 464-484 (LGGC…YYVL), 495-515 (FFLW…PILM), and 541-561 (MPMI…LYWL).

Belongs to the OXA1/ALB3/YidC family. Type 1 subfamily. In terms of assembly, interacts with the Sec translocase complex via SecD. Specifically interacts with transmembrane segments of nascent integral membrane proteins during membrane integration.

The protein resides in the cell inner membrane. Required for the insertion and/or proper folding and/or complex formation of integral membrane proteins into the membrane. Involved in integration of membrane proteins that insert both dependently and independently of the Sec translocase complex, as well as at least some lipoproteins. Aids folding of multispanning membrane proteins. This is Membrane protein insertase YidC from Alcanivorax borkumensis (strain ATCC 700651 / DSM 11573 / NCIMB 13689 / SK2).